Consider the following 296-residue polypeptide: Ribosomal protein L11 methyltransferase (296 aa).

4 residues coordinate S-adenosyl-L-methionine: Thr145, Gly166, Asp188, and Asn230.

Belongs to the methyltransferase superfamily. PrmA family.

It is found in the cytoplasm. It carries out the reaction L-lysyl-[protein] + 3 S-adenosyl-L-methionine = N(6),N(6),N(6)-trimethyl-L-lysyl-[protein] + 3 S-adenosyl-L-homocysteine + 3 H(+). Its function is as follows. Methylates ribosomal protein L11. This is Ribosomal protein L11 methyltransferase from Photorhabdus laumondii subsp. laumondii (strain DSM 15139 / CIP 105565 / TT01) (Photorhabdus luminescens subsp. laumondii).